A 403-amino-acid chain; its full sequence is Phosphoglycerate kinase (403 aa).

Substrate is bound by residues 21-23 (DFN), R36, 59-62 (HLGR), R118, and R151. ATP contacts are provided by residues K202, E328, and 354–357 (GGDS).

It belongs to the phosphoglycerate kinase family. Monomer.

The protein localises to the cytoplasm. It carries out the reaction (2R)-3-phosphoglycerate + ATP = (2R)-3-phospho-glyceroyl phosphate + ADP. It functions in the pathway carbohydrate degradation; glycolysis; pyruvate from D-glyceraldehyde 3-phosphate: step 2/5. In Akkermansia muciniphila (strain ATCC BAA-835 / DSM 22959 / JCM 33894 / BCRC 81048 / CCUG 64013 / CIP 107961 / Muc), this protein is Phosphoglycerate kinase.